A 465-amino-acid chain; its full sequence is Chromosomal replication initiator protein DnaA (465 aa).

Residues 1-87 (MLWTDCLTRL…RPGSILSSSE (87 aa)) form a domain I, interacts with DnaA modulators region. The tract at residues 81 to 123 (SILSSSEQPATTTAALQTAPIPQPAKVKREPEPVANTAVSSKS) is disordered. The segment covering 88–100 (QPATTTAALQTAP) has biased composition (low complexity). Residues 88–127 (QPATTTAALQTAPIPQPAKVKREPEPVANTAVSSKSSKKK) are domain II. The tract at residues 128–345 (LLNPQFTFSL…GALNKVVAIS (218 aa)) is domain III, AAA+ region. 4 residues coordinate ATP: glycine 173, glycine 175, lysine 176, and threonine 177. Residues 346–465 (RFKGAPIDLD…YKNLLRLLQS (120 aa)) are domain IV, binds dsDNA.

The protein belongs to the DnaA family. Oligomerizes as a right-handed, spiral filament on DNA at oriC.

The protein localises to the cytoplasm. Plays an essential role in the initiation and regulation of chromosomal replication. ATP-DnaA binds to the origin of replication (oriC) to initiate formation of the DNA replication initiation complex once per cell cycle. Binds the DnaA box (a 9 base pair repeat at the origin) and separates the double-stranded (ds)DNA. Forms a right-handed helical filament on oriC DNA; dsDNA binds to the exterior of the filament while single-stranded (ss)DNA is stabiized in the filament's interior. The ATP-DnaA-oriC complex binds and stabilizes one strand of the AT-rich DNA unwinding element (DUE), permitting loading of DNA polymerase. After initiation quickly degrades to an ADP-DnaA complex that is not apt for DNA replication. Binds acidic phospholipids. The protein is Chromosomal replication initiator protein DnaA of Acinetobacter baumannii (strain AB307-0294).